The chain runs to 157 residues: 2-C-methyl-D-erythritol 2,4-cyclodiphosphate synthase (157 aa).

Asp-9 and His-11 together coordinate a divalent metal cation. Residues 9 to 11 (DVH) and 35 to 36 (HS) each bind 4-CDP-2-C-methyl-D-erythritol 2-phosphate. Position 43 (His-43) interacts with a divalent metal cation. 4-CDP-2-C-methyl-D-erythritol 2-phosphate contacts are provided by residues 57-59 (DIG), 62-66 (FPDTD), 101-107 (AEKPKMA), 133-136 (TTTE), Phe-140, and Arg-143.

Belongs to the IspF family. In terms of assembly, homotrimer. A divalent metal cation serves as cofactor.

The catalysed reaction is 4-CDP-2-C-methyl-D-erythritol 2-phosphate = 2-C-methyl-D-erythritol 2,4-cyclic diphosphate + CMP. It participates in isoprenoid biosynthesis; isopentenyl diphosphate biosynthesis via DXP pathway; isopentenyl diphosphate from 1-deoxy-D-xylulose 5-phosphate: step 4/6. Functionally, involved in the biosynthesis of isopentenyl diphosphate (IPP) and dimethylallyl diphosphate (DMAPP), two major building blocks of isoprenoid compounds. Catalyzes the conversion of 4-diphosphocytidyl-2-C-methyl-D-erythritol 2-phosphate (CDP-ME2P) to 2-C-methyl-D-erythritol 2,4-cyclodiphosphate (ME-CPP) with a corresponding release of cytidine 5-monophosphate (CMP). This Listeria monocytogenes serovar 1/2a (strain ATCC BAA-679 / EGD-e) protein is 2-C-methyl-D-erythritol 2,4-cyclodiphosphate synthase.